We begin with the raw amino-acid sequence, 559 residues long: Potassium-transporting ATPase potassium-binding subunit (559 aa).

13 helical membrane-spanning segments follow: residues 5–25 (GFLL…PLGS), 27–47 (LARL…RILW), 63–83 (LLAL…LLFW), 132–152 (GLTV…FALI), 170–190 (LVRI…LFFI), 253–273 (LAQM…FGEA), 283–303 (LLWA…WAEV), 327–347 (FGVL…CGAV), 356–376 (ALGG…FGGV), 379–399 (GLYG…LMIG), 416–436 (MTAL…ALAM), 484–504 (LLAF…MAIA), and 524–544 (GALF…LTFI).

The protein belongs to the KdpA family. As to quaternary structure, the system is composed of three essential subunits: KdpA, KdpB and KdpC.

The protein localises to the cell inner membrane. Functionally, part of the high-affinity ATP-driven potassium transport (or Kdp) system, which catalyzes the hydrolysis of ATP coupled with the electrogenic transport of potassium into the cytoplasm. This subunit binds the periplasmic potassium ions and delivers the ions to the membrane domain of KdpB through an intramembrane tunnel. The sequence is that of Potassium-transporting ATPase potassium-binding subunit from Salmonella typhimurium (strain LT2 / SGSC1412 / ATCC 700720).